A 226-amino-acid polypeptide reads, in one-letter code: PKHD-type hydroxylase PputW619_4316 (226 aa).

One can recognise a Fe2OG dioxygenase domain in the interval 78-178; that stretch reads KVFPPLINCY…RYAAFFWTQS (101 aa). Fe cation contacts are provided by His-96, Asp-98, and His-159. Arg-169 contacts 2-oxoglutarate.

It depends on Fe(2+) as a cofactor. L-ascorbate serves as cofactor.

The chain is PKHD-type hydroxylase PputW619_4316 from Pseudomonas putida (strain W619).